Consider the following 198-residue polypeptide: ATP-dependent Clp protease proteolytic subunit (198 aa).

Serine 98 (nucleophile) is an active-site residue. The active site involves histidine 123.

Belongs to the peptidase S14 family. As to quaternary structure, fourteen ClpP subunits assemble into 2 heptameric rings which stack back to back to give a disk-like structure with a central cavity, resembling the structure of eukaryotic proteasomes.

The protein localises to the cytoplasm. It catalyses the reaction Hydrolysis of proteins to small peptides in the presence of ATP and magnesium. alpha-casein is the usual test substrate. In the absence of ATP, only oligopeptides shorter than five residues are hydrolyzed (such as succinyl-Leu-Tyr-|-NHMec, and Leu-Tyr-Leu-|-Tyr-Trp, in which cleavage of the -Tyr-|-Leu- and -Tyr-|-Trp bonds also occurs).. Its function is as follows. Cleaves peptides in various proteins in a process that requires ATP hydrolysis. Has a chymotrypsin-like activity. Plays a major role in the degradation of misfolded proteins. The sequence is that of ATP-dependent Clp protease proteolytic subunit from Ehrlichia ruminantium (strain Gardel).